Consider the following 1006-residue polypeptide: Probable beta-galactosidase A (1006 aa).

The signal sequence occupies residues 1 to 18 (MKLLSVCAIALLAAQAAG). 4 residues coordinate substrate: Tyr-96, Asn-140, Ala-141, and Glu-142. Asn-156 carries N-linked (GlcNAc...) asparagine glycosylation. Asn-199 is a binding site for substrate. Glu-200 (proton donor) is an active-site residue. A disulfide bridge connects residues Cys-205 and Cys-206. Tyr-260 is a substrate binding site. Cys-266 and Cys-315 are disulfide-bonded. Glu-298 (nucleophile) is an active-site residue. Residue Tyr-364 coordinates substrate. Residues Asn-373, Asn-402, Asn-422, Asn-622, Asn-760, Asn-777, and Asn-914 are each glycosylated (N-linked (GlcNAc...) asparagine).

This sequence belongs to the glycosyl hydrolase 35 family.

The protein resides in the secreted. It catalyses the reaction Hydrolysis of terminal non-reducing beta-D-galactose residues in beta-D-galactosides.. Cleaves beta-linked terminal galactosyl residues from gangliosides, glycoproteins, and glycosaminoglycans. This is Probable beta-galactosidase A (lacA) from Aspergillus fumigatus (strain ATCC MYA-4609 / CBS 101355 / FGSC A1100 / Af293) (Neosartorya fumigata).